Here is a 187-residue protein sequence, read N- to C-terminus: Adenylate kinase (187 aa).

10–15 lines the ATP pocket; the sequence is GSGKGT. An NMP region spans residues 30–59; sequence STGDLLRSEVVAGTPLGLQAKQVMAQGDLV. Residues threonine 31, arginine 36, 57–59, 85–88, and glutamine 92 each bind AMP; these read DLV and GYPR. An LID region spans residues 126–136; it reads GRAQAEGREDD. Residue arginine 127 participates in ATP binding. 2 residues coordinate AMP: arginine 133 and arginine 144. Glycine 172 provides a ligand contact to ATP.

This sequence belongs to the adenylate kinase family. In terms of assembly, monomer.

It is found in the cytoplasm. It catalyses the reaction AMP + ATP = 2 ADP. It functions in the pathway purine metabolism; AMP biosynthesis via salvage pathway; AMP from ADP: step 1/1. Functionally, catalyzes the reversible transfer of the terminal phosphate group between ATP and AMP. Plays an important role in cellular energy homeostasis and in adenine nucleotide metabolism. The sequence is that of Adenylate kinase from Xylella fastidiosa (strain M23).